We begin with the raw amino-acid sequence, 976 residues long: R3H domain-containing protein 2 (976 aa).

Disordered stretches follow at residues 32 to 71 (ISKT…AKSN) and 105 to 147 (ISCP…QEYT). A compositionally biased stretch (basic and acidic residues) spans 36–56 (PSKEEIEKECEDTSLRQETQR). Ser-37 is modified (phosphoserine). Residues 58 to 71 (TSNHGHARKRAKSN) show a composition bias toward basic residues. A compositionally biased stretch (basic and acidic residues) spans 109–143 (SDKEEEKSTKDVSEKEDKDKNKEKIPRKMLSRDSS). Ser-143 is modified (phosphoserine). In terms of domain architecture, R3H spans 169–232 (RMMLLKLEQE…AVIINKTSNT (64 aa)). Residues 233-310 (RIPEQRFSEH…NREGLSRTSS (78 aa)) enclose the SUZ domain. The segment covering 257–269 (LKRDDASMDRDDN) has biased composition (basic and acidic residues). Disordered regions lie at residues 257–376 (LKRD…ISRP), 401–457 (CTAQ…EAAD), 480–560 (ASTG…PGLQ), 661–725 (GTSP…PSMV), and 738–780 (RGQK…SLSS). Residues 306–317 (SRTSSSRQSSTD) are compositionally biased toward low complexity. Ser-330, Ser-333, and Ser-349 each carry phosphoserine. A compositionally biased stretch (low complexity) spans 401–415 (CTAQQQQQQQQQQLP). Polar residues-rich tracts occupy residues 441 to 453 (PFGQ…QGST) and 480 to 504 (ASTG…QQVL). The span at 543–560 (SPQRGQQLPQPSQQPGLQ) shows a compositional bias: low complexity. Positions 682 to 691 (SPSPCSPPQM) are enriched in pro residues. Positions 692 to 714 (PQQYSGVSPSGPGVVVMQLNVPN) are enriched in low complexity. Residues 748–758 (PDSSPQANTQM) show a composition bias toward polar residues. A compositionally biased stretch (low complexity) spans 759-777 (SSSPVTSPTQSPAPSPVTS). Phosphoserine occurs at positions 853 and 855. Residues Thr-856 and Thr-860 each carry the phosphothreonine modification.

It is found in the nucleus. The protein is R3H domain-containing protein 2 (R3HDM2) of Homo sapiens (Human).